A 105-amino-acid chain; its full sequence is Nitrogen fixation nifHD region GlnB-like protein 1 (105 aa).

The protein belongs to the P(II) protein family.

Could be involved in the regulation of nitrogen fixation. In Methanothermococcus thermolithotrophicus (Methanococcus thermolithotrophicus), this protein is Nitrogen fixation nifHD region GlnB-like protein 1 (glnBA).